Here is a 351-residue protein sequence, read N- to C-terminus: uncharacterized protein (351 aa).

The signal sequence occupies residues 1–32 (MKNKKRVFIASSLSCVLLLLSAANTEANSANK). A disordered region spans residues 26-74 (EANSANKDSQDQTKKEHVDKAQQKEKRNVNDKDKNTPGPDDIGKNGKVT). The span at 33–60 (DSQDQTKKEHVDKAQQKEKRNVNDKDKN) shows a compositional bias: basic and acidic residues.

This sequence belongs to the aerolysin family.

This is an uncharacterized protein from Staphylococcus aureus (strain MRSA252).